We begin with the raw amino-acid sequence, 362 residues long: MSTTLLSAFYDIDLLYKNEKVLNNLALSTMLDKKAVGSPVSSTNSNLFPGFLRRHSASNLQALSGNTNPAKFCPNNNQLKEPAAGSTALLNRENKFRDRSFSENGERSQHLLHLQQQQQQKAGAQVNSTRYKTELCRPFEESGACKYGEKCQFAHGFHELRSLTRHPKYKTELCRTFHTIGFCPYGPRCHFIHNAEERRQAPGAGERPKLHHSLSFSGFPNHSLDSPLLESPTSRTPPPQSSSSLYCQELLQLNNNNNPCANNAFTFSGQELGLIAPLAIHTQNPPYCRQPSSSPPLSFQPLRRVSESPVFDAPPSPPDSLSDRDSYLSGSLSSGSLSGSDSPTLDSNRRLPIFSRLSISDD.

Over residues 100–109 (SFSENGERSQ) the composition is skewed to basic and acidic residues. Residues 100-126 (SFSENGERSQHLLHLQQQQQQKAGAQV) are disordered. The segment covering 111-120 (LLHLQQQQQQ) has biased composition (low complexity). The RNA-binding signature appears at 130-135 (RYKTEL). 2 C3H1-type zinc fingers span residues 130 to 158 (RYKT…HGFH) and 168 to 196 (KYKT…HNAE). The RNA-binding stretch occupies residues 147-188 (YGEKCQFAHGFHELRSLTRHPKYKTELCRTFHTIGFCPYGPR). Disordered stretches follow at residues 225–244 (DSPL…SSSS) and 306–362 (SESP…ISDD). A compositionally biased stretch (low complexity) spans 327–346 (YLSGSLSSGSLSGSDSPTLD).

Phosphorylated.

The protein resides in the nucleus. Its subcellular location is the cytoplasm. Zinc-finger RNA-binding protein that destabilizes several cytoplasmic AU-rich element (ARE)-containing mRNA transcripts by promoting their poly(A) tail removal or deadenylation, and hence provide a mechanism for attenuating protein synthesis. Acts as a 3'-untranslated region (UTR) ARE mRNA-binding adapter protein to communicate signaling events to the mRNA decay machinery. Functions by recruiting the CCR4-NOT deadenylase complex and probably other components of the cytoplasmic RNA decay machinery to the bound ARE-containing mRNAs, and hence promotes ARE-mediated mRNA deadenylation and decay processes. Binds to 3'-UTR ARE of numerous mRNAs. Also induces the degradation of ARE-containing mRNAs even in absence of poly(A) tail. Required for tubulogenesis during pronephros development. This is mRNA decay activator protein ZFP36L2 (zfp36l2) from Xenopus tropicalis (Western clawed frog).